The sequence spans 197 residues: Small ribosomal subunit protein uS10c (197 aa).

A chloroplast-targeting transit peptide spans 1–60 (MATSSLSTIVFSPLALSNSSSFPNKPQVSNLSLHSSLSNLRRTLSHSSPSSSSSSNVRVF). The tract at residues 67–91 (ESQETGPESYVEEGSETSALGIGAD) is disordered.

Belongs to the universal ribosomal protein uS10 family. Part of the 30S ribosomal subunit.

It localises to the plastid. The protein resides in the chloroplast. In Mesembryanthemum crystallinum (Common ice plant), this protein is Small ribosomal subunit protein uS10c (RPS10).